The chain runs to 256 residues: MLHIADKTFDSHLFTGTGKFASSQLMVESIRASGSQLVTLAMKRVDLRQHNDAILEPLIAAGVTLLPNTSGAKTAEEAIFAAHLAREALGTNWLKLEIHPDARWLLPDPIETLKAAETLVQQGFVVLPYCGADPVLCKRLEEVGCAAVMPLGAPIGSNQGLETRAMLEIIIQQATVPVVVDAGIGVPSHAAQALEMGANAVLVNTAIAVADDPVNMAKAFRLAVEAGLLARQAGPGSRSHFAHATSPLTEFLEASA.

Residue Lys-95 is the Schiff-base intermediate with DXP of the active site. Residues Gly-156, Ala-182–Gly-183, and Asn-204–Thr-205 each bind 1-deoxy-D-xylulose 5-phosphate.

It belongs to the ThiG family. In terms of assembly, homotetramer. Forms heterodimers with either ThiH or ThiS.

It localises to the cytoplasm. The catalysed reaction is [ThiS sulfur-carrier protein]-C-terminal-Gly-aminoethanethioate + 2-iminoacetate + 1-deoxy-D-xylulose 5-phosphate = [ThiS sulfur-carrier protein]-C-terminal Gly-Gly + 2-[(2R,5Z)-2-carboxy-4-methylthiazol-5(2H)-ylidene]ethyl phosphate + 2 H2O + H(+). The protein operates within cofactor biosynthesis; thiamine diphosphate biosynthesis. Functionally, catalyzes the rearrangement of 1-deoxy-D-xylulose 5-phosphate (DXP) to produce the thiazole phosphate moiety of thiamine. Sulfur is provided by the thiocarboxylate moiety of the carrier protein ThiS. In vitro, sulfur can be provided by H(2)S. This is Thiazole synthase from Escherichia coli O6:H1 (strain CFT073 / ATCC 700928 / UPEC).